We begin with the raw amino-acid sequence, 166 residues long: Putative 4-hydroxy-4-methyl-2-oxoglutarate aldolase 3 (166 aa).

Residue alanine 2 is modified to N-acetylalanine. Residues 81 to 84 (GGNL) and arginine 103 each bind substrate. Residue aspartate 104 coordinates a divalent metal cation.

It belongs to the class II aldolase/RraA-like family. As to quaternary structure, homotrimer. The cofactor is a divalent metal cation.

The enzyme catalyses 4-hydroxy-4-methyl-2-oxoglutarate = 2 pyruvate. The catalysed reaction is oxaloacetate + H(+) = pyruvate + CO2. In terms of biological role, catalyzes the aldol cleavage of 4-hydroxy-4-methyl-2-oxoglutarate (HMG) into 2 molecules of pyruvate. Also contains a secondary oxaloacetate (OAA) decarboxylase activity due to the common pyruvate enolate transition state formed following C-C bond cleavage in the retro-aldol and decarboxylation reactions. This is Putative 4-hydroxy-4-methyl-2-oxoglutarate aldolase 3 from Arabidopsis thaliana (Mouse-ear cress).